Reading from the N-terminus, the 135-residue chain is Transcriptional activator protein (135 aa).

The short motif at 17-32 (KIQHHIAKKRQVRRRR) is the Nuclear localization signal element. A zinc finger lies at 37–54 (CGCSYYIHLDCINHGFTH). A transactivation region spans residues 120 to 135 (HLDDLTVSDWSFFKSL).

This sequence belongs to the geminiviridae transcriptional activator protein family. As to quaternary structure, monomer. Homodimer. Homooligomer. Self-interaction correlates with nuclear localization and efficient activation of transcription. Monomers suppress local silencing by interacting with and inactivating host adenosine kinase 2 (ADK2) in the cytoplasm. Interacts with and inhibits host SNF1 kinase. Binds to ssDNA. May interact with host RPS27A. Post-translationally, phosphorylated.

The protein resides in the host nucleus. It is found in the host cytoplasm. Multifunctional protein that modulates host antiviral defenses and promotes host attractiveness to insect vectors. Acts as a suppressor of RNA-mediated gene silencing, also known as post-transcriptional gene silencing (PTGS), a mechanism of plant viral defense that limits the accumulation of viral RNAs. TrAP suppresses the host RNA silencing by inhibiting adenosine kinase 2 (ADK2), a kinase involved in a general methylation pathway. Also suppresses the host basal defense by interacting with and inhibiting SNF1 kinase, a key regulator of cell metabolism implicated in innate antiviral defense. Its function is as follows. Inhibits signal transduction by the phytohormone jasmonate, making the infected plant more attractive to aphids, which are the second host to play a role as a dissemination vector. Acts by binding to ubiquitin precursor RPS27A, thereby preventing ubiquitin degradation of JAZ. This chain is Transcriptional activator protein, found in Capsicum annuum (Capsicum pepper).